A 257-amino-acid chain; its full sequence is Pantothenate synthetase (257 aa).

An ATP-binding site is contributed by 29–36; that stretch reads MGNLHAGH. Catalysis depends on His-36, which acts as the Proton donor. Gln-60 is a (R)-pantoate binding site. Residue Gln-60 participates in beta-alanine binding. An ATP-binding site is contributed by 145-148; it reads GEKD. Gln-151 is a (R)-pantoate binding site. ATP-binding positions include Val-174 and 182–185; that span reads LSSR.

Belongs to the pantothenate synthetase family. Homodimer.

It localises to the cytoplasm. It carries out the reaction (R)-pantoate + beta-alanine + ATP = (R)-pantothenate + AMP + diphosphate + H(+). It functions in the pathway cofactor biosynthesis; (R)-pantothenate biosynthesis; (R)-pantothenate from (R)-pantoate and beta-alanine: step 1/1. Its function is as follows. Catalyzes the condensation of pantoate with beta-alanine in an ATP-dependent reaction via a pantoyl-adenylate intermediate. The protein is Pantothenate synthetase of Coxiella burnetii (strain CbuK_Q154) (Coxiella burnetii (strain Q154)).